Reading from the N-terminus, the 462-residue chain is MTKDFIVKDIALAEFGRKELDIAETEMPGLMALRAEYGDSKPLAGARIVGSLHMTIQTAVLIETLVALGADVRWASCNIFSTQDHAAAAIAAGGTPVFAIKGQSLEEHWDYLDRSFMFEDGPNLILDDGGDATLYVLLGARAEAGEEIIPVPTSEEEEAIKAQIKKRMAASPGWFTKVRDQIKGVSEETTTGVHRLYDLVKQGQLPFPAINVNDSVTKSKFDNKYGCKESLVDGIRRATDTMMAGKVAVVMGYGDVGKGSAASLRGAGARVKVTEVDPICALQAAMDGFEVVLLEDVVGSADIFITTTGNKDVIRIEHMRAMKDMAIVGNIGHFDNEIQVAALKNHKWTNIKEQVDMIEMPNGNRLILLSEGRLLNLGNATGHPSFVMSASFTNQVLAQIELWTRADAYDNEVYILPKHLDEKVARLHLDRIGVKLTPLDPEQAAYIGVKPEGPFKPEHYRY.

The substrate site is built by threonine 55, aspartate 128, and glutamate 188. 189–191 contacts NAD(+); it reads TTT. Residues lysine 218 and aspartate 222 each coordinate substrate. Residues asparagine 223, 252–257, glutamate 275, asparagine 310, 331–333, and asparagine 376 each bind NAD(+); these read GYGDVG and IGH.

The protein belongs to the adenosylhomocysteinase family. It depends on NAD(+) as a cofactor.

It is found in the cytoplasm. The catalysed reaction is S-adenosyl-L-homocysteine + H2O = L-homocysteine + adenosine. The protein operates within amino-acid biosynthesis; L-homocysteine biosynthesis; L-homocysteine from S-adenosyl-L-homocysteine: step 1/1. In terms of biological role, may play a key role in the regulation of the intracellular concentration of adenosylhomocysteine. The protein is Adenosylhomocysteinase of Roseobacter denitrificans (strain ATCC 33942 / OCh 114) (Erythrobacter sp. (strain OCh 114)).